A 502-amino-acid chain; its full sequence is Ubiquitin-associated protein 1 (502 aa).

The tract at residues 1–95 is interaction with ESCRT-I; the sequence is MASKKLGTDV…AEAKVNSKSG (95 aa). Positions 17 to 63 constitute a UMA domain; sequence LDDVPFKIGDKFKTPAKVGLPIGFSLPDCLQVVREMQYDFSLEKKTI. Residues 80–100 show a composition bias toward basic and acidic residues; that stretch reads ERKAEEAEAKVNSKSGPEGDS. Disordered regions lie at residues 80–117 and 135–156; these read ERKA…PPPI and VSSS…DFNP. Phosphoserine occurs at positions 146, 205, and 289. Residues 260 to 290 form an interaction with PTPN23 region; it reads VSNIKSLSFPKLDSDDSNQKTVKLASTFHST. UBA domains lie at 389 to 430 and 451 to 498; these read SPSE…LFAH and QCSE…LMAR.

Component of an ESCRT-I complex (endosomal sorting complex required for transport I) which consists of TSG101, VPS28, VPS37A and UBAP1 in a 1:1:1:1 stoichiometry. Interacts with PTPN23. Interacts (via UBA domains) with ubiquitinated proteins. In terms of tissue distribution, ubiquitous. Highly expressed in heart, liver, brain, kidney, spleen, skeletal muscle, stomach, testis and lung.

The protein resides in the cytoplasm. It is found in the cytosol. Its subcellular location is the endosome. Functionally, component of the ESCRT-I complex, a regulator of vesicular trafficking process. Binds to ubiquitinated cargo proteins and is required for the sorting of endocytic ubiquitinated cargos into multivesicular bodies (MVBs). Plays a role in the proteasomal degradation of ubiquitinated cell-surface proteins, such as EGFR and BST2. This chain is Ubiquitin-associated protein 1, found in Mus musculus (Mouse).